Reading from the N-terminus, the 89-residue chain is Acylphosphatase (89 aa).

Residues 4 to 89 (SRRFLVSGTV…EQPPEGFRVL (86 aa)) form the Acylphosphatase-like domain. Catalysis depends on residues arginine 19 and asparagine 37.

Belongs to the acylphosphatase family.

It carries out the reaction an acyl phosphate + H2O = a carboxylate + phosphate + H(+). The chain is Acylphosphatase (acyP) from Alkalilimnicola ehrlichii (strain ATCC BAA-1101 / DSM 17681 / MLHE-1).